The primary structure comprises 342 residues: NLP effector protein Pc107869 (342 aa).

Residues 1-19 form the signal peptide; it reads MKTGFFLFAACAALVAVQA. N-linked (GlcNAc...) asparagine glycosylation occurs at Asn24. The disordered stretch occupies residues 41–125; sequence APRTKAPPTK…PTPDPGPWEA (85 aa). A compositionally biased stretch (low complexity) spans 55-75; it reads QQSSLSGSQEQQQEQIETPAP. Positions 93-121 are enriched in pro residues; that stretch reads TPAPTPAPTPAPTPAPTPAPTPAPTPDPG. A Hepta-peptide GHRHDWE motif motif is present at residues 226–232; it reads GHRHDWE.

This sequence belongs to the Necrosis inducing protein (NPP1) family.

The protein resides in the secreted. Its function is as follows. Secreted effector that contributes strongly to virulence during infection by P.capsici. Induces cell death in the Solanaceae, including Nicotiana benthamiana. The protein is NLP effector protein Pc107869 of Phytophthora capsici.